The sequence spans 119 residues: Immunoglobulin heavy variable 3-15 (119 aa).

Residues 1–19 (MEFGLSWIFLAAILKGVQC) form the signal peptide. A framework-1 region spans residues 20-44 (EVQLVESGGGLVKPGGSLRLSCAAS). The 100-residue stretch at 20-119 (EVQLVESGGG…EDTAVYYCTT (100 aa)) folds into the Ig-like domain. Cysteines 41 and 117 form a disulfide. The tract at residues 45–52 (GFTFSNAW) is complementarity-determining-1. The tract at residues 53–69 (MSWVRQAPGKGLEWVGR) is framework-2. A complementarity-determining-2 region spans residues 70 to 79 (IKSKTDGGTT). Residues 80 to 117 (DYAAPVKGRFTISRDDSKNTLYLQMNSLKTEDTAVYYC) are framework-3. Residues 118-119 (TT) form a complementarity-determining-3 region.

As to quaternary structure, immunoglobulins are composed of two identical heavy chains and two identical light chains; disulfide-linked.

It localises to the secreted. The protein localises to the cell membrane. In terms of biological role, v region of the variable domain of immunoglobulin heavy chains that participates in the antigen recognition. Immunoglobulins, also known as antibodies, are membrane-bound or secreted glycoproteins produced by B lymphocytes. In the recognition phase of humoral immunity, the membrane-bound immunoglobulins serve as receptors which, upon binding of a specific antigen, trigger the clonal expansion and differentiation of B lymphocytes into immunoglobulins-secreting plasma cells. Secreted immunoglobulins mediate the effector phase of humoral immunity, which results in the elimination of bound antigens. The antigen binding site is formed by the variable domain of one heavy chain, together with that of its associated light chain. Thus, each immunoglobulin has two antigen binding sites with remarkable affinity for a particular antigen. The variable domains are assembled by a process called V-(D)-J rearrangement and can then be subjected to somatic hypermutations which, after exposure to antigen and selection, allow affinity maturation for a particular antigen. This is Immunoglobulin heavy variable 3-15 from Homo sapiens (Human).